The following is a 689-amino-acid chain: MPRDYSLDKVRNIGIMAHIDAGKTTTTERILFYTGKVHKLGEVHEGTATMDWMVQEQERGITITSAATTCYWKGHKINIIDTPGHVDFTVEVERSLRILDGAVAVFSAKEGVEPQSETVWRQADKYHVPRIAYVNKMDIIGADFFNVIKMIKERLGANPVAIQIPIGKEDTFRGIVDLIKMEAIIYEDDLGTVMDETEIPDDLKDLAEEYREKLLEAVSEQDETILEKYLEGEEITEEEIHKALRKGTINGELVPVVCGSSYKNKGIQPMLDAIVRYLPSPLDLPPVKGMALATGEEIERKADDSEPFSALAFKIMADPYVGKLAFFRVYSGTLNAGSYVLNSTKGKKERISRILQMHANHRQEMEAVYTGDIAAAVGLKDTTTGDTLCDENHPILLESMDFPEPVISVAIEPKTKAAQEKMTTALLKLAEEDPTFKTYTDQETGQTIIAGMGELHLEIIVDRLRREFNVDCNVGKPQVAYKETITKPVKIEGKFIRQSGGRGQYGHVWLEMEPAPRGEGYTFENRIVGGVIPKEYIPAVDAGVQEAMQNGVLGGYPVIDVKVALVDGSYHEVDSSDMAFKIAGSIAFKEGMKKANPVLLEPIMKVEVVVPEEYMGDIIGDINARRGRVEGMEARAGAQVIRAFVPLAEMFGYATDLRSKTQGRGTYTMQFHHYEEVPKNIADQILEKK.

The region spanning 8-282 (DKVRNIGIMA…AIVRYLPSPL (275 aa)) is the tr-type G domain. GTP contacts are provided by residues 17–24 (AHIDAGKT), 81–85 (DTPGH), and 135–138 (NKMD).

This sequence belongs to the TRAFAC class translation factor GTPase superfamily. Classic translation factor GTPase family. EF-G/EF-2 subfamily.

The protein resides in the cytoplasm. In terms of biological role, catalyzes the GTP-dependent ribosomal translocation step during translation elongation. During this step, the ribosome changes from the pre-translocational (PRE) to the post-translocational (POST) state as the newly formed A-site-bound peptidyl-tRNA and P-site-bound deacylated tRNA move to the P and E sites, respectively. Catalyzes the coordinated movement of the two tRNA molecules, the mRNA and conformational changes in the ribosome. This is Elongation factor G from Thermoanaerobacter pseudethanolicus (strain ATCC 33223 / 39E) (Clostridium thermohydrosulfuricum).